We begin with the raw amino-acid sequence, 205 residues long: Endoribonuclease YbeY (205 aa).

3 residues coordinate Zn(2+): His-124, His-128, and His-134. Residues 162–205 (GTAPVAPGGEAQVPNEALETSGKRQDHSLGEILPGGMSRRLAGS) are disordered.

The protein belongs to the endoribonuclease YbeY family. The cofactor is Zn(2+).

Its subcellular location is the cytoplasm. Single strand-specific metallo-endoribonuclease involved in late-stage 70S ribosome quality control and in maturation of the 3' terminus of the 16S rRNA. The sequence is that of Endoribonuclease YbeY from Beijerinckia indica subsp. indica (strain ATCC 9039 / DSM 1715 / NCIMB 8712).